The primary structure comprises 241 residues: Acetoacetyl-CoA reductase (241 aa).

NADP(+) is bound by residues 12 to 14 (RGI), arginine 39, and 82 to 86 (NAGIT). Substrate contacts are provided by residues aspartate 88 and 141–144 (QMGQ). The Proton acceptor role is filled by tyrosine 147. 177–180 (PGYI) is a binding site for NADP(+). 178 to 179 (GY) lines the substrate pocket.

This sequence belongs to the short-chain dehydrogenases/reductases (SDR) family.

The protein localises to the cytoplasm. The catalysed reaction is a (3R)-3-hydroxyacyl-CoA + NADP(+) = a 3-oxoacyl-CoA + NADPH + H(+). Its pathway is biopolymer metabolism; poly-(R)-3-hydroxybutanoate biosynthesis. This chain is Acetoacetyl-CoA reductase, found in Rhizobium meliloti (strain 1021) (Ensifer meliloti).